Here is a 355-residue protein sequence, read N- to C-terminus: DnaJ homolog dnj-20 (355 aa).

Residues 1–21 (MRILNVSLLVLASSLVAFVEC) form the signal peptide. Residues 24–89 (DFYKILGVAK…EKRAMYDRHG (66 aa)) form the J domain.

This chain is DnaJ homolog dnj-20, found in Caenorhabditis elegans.